Here is a 361-residue protein sequence, read N- to C-terminus: Peptide chain release factor 1 (361 aa).

Gln240 bears the N5-methylglutamine mark.

This sequence belongs to the prokaryotic/mitochondrial release factor family. Post-translationally, methylated by PrmC. Methylation increases the termination efficiency of RF1.

The protein localises to the cytoplasm. Functionally, peptide chain release factor 1 directs the termination of translation in response to the peptide chain termination codons UAG and UAA. The chain is Peptide chain release factor 1 from Mycobacterium leprae (strain Br4923).